A 118-amino-acid chain; its full sequence is Ribosome-binding factor A (118 aa).

Belongs to the RbfA family. As to quaternary structure, monomer. Binds 30S ribosomal subunits, but not 50S ribosomal subunits or 70S ribosomes.

Its subcellular location is the cytoplasm. Functionally, one of several proteins that assist in the late maturation steps of the functional core of the 30S ribosomal subunit. Associates with free 30S ribosomal subunits (but not with 30S subunits that are part of 70S ribosomes or polysomes). Required for efficient processing of 16S rRNA. May interact with the 5'-terminal helix region of 16S rRNA. This Bacillus anthracis (strain A0248) protein is Ribosome-binding factor A.